Here is a 243-residue protein sequence, read N- to C-terminus: Clathrin light chain A (243 aa).

Blocked amino end (Met) is present on M1. Disordered regions lie at residues 1–22 (MAEL…GVAG) and 49–87 (ILDG…GPTD). Residues 10-20 (PAGGPALGNGV) are compositionally biased toward gly residues. The interval 95–157 (VDRLQSEPES…QLQKTKANNR (63 aa)) is involved in binding clathrin heavy chain. Phosphoserine occurs at positions 100 and 201. K218 carries the N6-acetyllysine modification. S231 bears the Phosphoserine mark. Position 237 is an N6-acetyllysine (K237).

This sequence belongs to the clathrin light chain family. In terms of assembly, clathrin coats are formed from molecules containing 3 heavy chains and 3 light chains. Interacts with CALY; the interaction stimulates clathrin self-assembly and clathrin-mediated endocytosis. Interacts with CKAP5 and TACC3 forming the TACC3/ch-TOG/clathrin complex located at spindle inter-microtubules bridges; the complex implicates clathrin triskelions.

It is found in the cytoplasmic vesicle membrane. It localises to the membrane. The protein resides in the coated pit. Its subcellular location is the cytoplasm. The protein localises to the cytoskeleton. It is found in the spindle. Its function is as follows. Clathrin is the major protein of the polyhedral coat of coated pits and vesicles. Acts as a component of the TACC3/ch-TOG/clathrin complex proposed to contribute to stabilization of kinetochore fibers of the mitotic spindle by acting as inter-microtubule bridge. In Bos taurus (Bovine), this protein is Clathrin light chain A (CLTA).